A 1839-amino-acid chain; its full sequence is Mannuronan C5-epimerase AlgE3 (1839 aa).

8 PbH1 repeats span residues 133–155 (DRDV…DPHE), 157–179 (TINL…VADY), 180–202 (QVGG…NIVT), 204–226 (TNDF…VVQR), 257–279 (THDV…RVYG), 280–302 (AQDV…YAEV), 320–342 (TTGT…GIQE), and 347–369 (TDYS…RLYG). Polar residues predominate over residues 372–386 (STVSEQPSSGQQATL). The interval 372–392 (STVSEQPSSGQQATLEGTAGN) is disordered. Hemolysin-type calcium-binding repeat units follow at residues 387-399 (EGTA…SGTG), 406-422 (GLAG…DDTL), 424-440 (GGAG…ADTF), 538-550 (TGTE…SGTD), 557-573 (GYGG…NDIL), 574-591 (VGGA…ADVF), 695-709 (EGTD…TGAD), 714-730 (GLGG…DDVL), and 732-748 (GGAE…ADTF). PbH1 repeat units lie at residues 975-997 (DRNV…DPHE), 999-1021 (TINL…VADY), 1022-1044 (LVDS…NVVT), 1046-1068 (TYDF…VIQR), 1099-1121 (TNNI…RLYG), 1122-1143 (TEDV…AYAE), 1161-1183 (TTGT…GIEE), and 1188-1210 (TDYS…RLNG). Residues 1215-1236 (VSDQPGTGQQATLEGTTGNDTL) show a composition bias toward polar residues. A disordered region spans residues 1215–1238 (VSDQPGTGQQATLEGTTGNDTLGG). Hemolysin-type calcium-binding repeat units lie at residues 1229–1243 (GTTG…DAHE), 1247–1263 (GLDG…NDIL), 1265–1281 (GGVG…ADTF), 1398–1414 (GHAG…DDIL), 1415–1432 (VGGA…ADVF), 1536–1552 (EGTA…ADEV), 1554–1571 (HGGS…ADVF), 1670–1681 (GGDGNDTLSGGS), 1688–1704 (GGAG…NDIL), and 1706–1722 (GGAG…SDIF).

It belongs to the D-mannuronate C5-epimerase family. It depends on Ca(2+) as a cofactor.

Its subcellular location is the secreted. It carries out the reaction [(1-&gt;4)-beta-D-mannuronosyl](n) = [alginate](n). It participates in glycan biosynthesis; alginate biosynthesis. With respect to regulation, inhibited by zinc. Converts beta-D-mannuronic acid (M) to alpha-L-guluronic acid (G), producing a polymer with gel-forming capacity, required for the formation of the cyst coat. This chain is Mannuronan C5-epimerase AlgE3, found in Azotobacter vinelandii.